The sequence spans 390 residues: Guanine nucleotide exchange factor for Rab-3A (390 aa).

Positions 1–60 are disordered; sequence MWSGQPHPDEGHPPPLEAVPVPWKSVGPCKSHRESLGGLPETPAGEEAQGEEGPAATQLD. Low complexity predominate over residues 40-58; that stretch reads PETPAGEEAQGEEGPAATQ. Residues 73–161 adopt a coiled-coil conformation; the sequence is EKGSEFLKEE…AEVTALKTLV (89 aa). The segment at 166–194 is disordered; it reads PASPNRELHPQLLSPTKAGPRKGHLRHKS. Phosphoserine is present on residues Ser168 and Ser179. Residues 184–194 show a composition bias toward basic residues; that stretch reads GPRKGHLRHKS.

It belongs to the SEC2 family. As to quaternary structure, interacts with RAB3A and IHPK1 through the coiled-coil domain. This interaction is competitive. IHPK1 kinase activity is not required for this interaction.

Guanine nucleotide exchange factor (GEF) which may activate RAB3A, a GTPase that regulates synaptic vesicle exocytosis. Promotes the exchange of GDP to GTP, converting inactive GDP-bound Rab proteins into their active GTP-bound form. May also activate RAB8A and RAB8B. The chain is Guanine nucleotide exchange factor for Rab-3A (RAB3IL1) from Bos taurus (Bovine).